The chain runs to 20 residues: Cytochrome c oxidase subunit 8B, mitochondrial (20 aa).

Positions leucine 1–threonine 20 are disordered.

This sequence belongs to the cytochrome c oxidase VIII family. As to quaternary structure, component of the cytochrome c oxidase (complex IV, CIV), a multisubunit enzyme composed of 14 subunits. The complex is composed of a catalytic core of 3 subunits MT-CO1, MT-CO2 and MT-CO3, encoded in the mitochondrial DNA, and 11 supernumerary subunits COX4I, COX5A, COX5B, COX6A, COX6B, COX6C, COX7A, COX7B, COX7C, COX8 and NDUFA4, which are encoded in the nuclear genome. The complex exists as a monomer or a dimer and forms supercomplexes (SCs) in the inner mitochondrial membrane with NADH-ubiquinone oxidoreductase (complex I, CI) and ubiquinol-cytochrome c oxidoreductase (cytochrome b-c1 complex, complex III, CIII), resulting in different assemblies (supercomplex SCI(1)III(2)IV(1) and megacomplex MCI(2)III(2)IV(2)).

It is found in the mitochondrion inner membrane. It functions in the pathway energy metabolism; oxidative phosphorylation. In terms of biological role, component of the cytochrome c oxidase, the last enzyme in the mitochondrial electron transport chain which drives oxidative phosphorylation. The respiratory chain contains 3 multisubunit complexes succinate dehydrogenase (complex II, CII), ubiquinol-cytochrome c oxidoreductase (cytochrome b-c1 complex, complex III, CIII) and cytochrome c oxidase (complex IV, CIV), that cooperate to transfer electrons derived from NADH and succinate to molecular oxygen, creating an electrochemical gradient over the inner membrane that drives transmembrane transport and the ATP synthase. Cytochrome c oxidase is the component of the respiratory chain that catalyzes the reduction of oxygen to water. Electrons originating from reduced cytochrome c in the intermembrane space (IMS) are transferred via the dinuclear copper A center (CU(A)) of subunit 2 and heme A of subunit 1 to the active site in subunit 1, a binuclear center (BNC) formed by heme A3 and copper B (CU(B)). The BNC reduces molecular oxygen to 2 water molecules using 4 electrons from cytochrome c in the IMS and 4 protons from the mitochondrial matrix. This chain is Cytochrome c oxidase subunit 8B, mitochondrial, found in Oncorhynchus mykiss (Rainbow trout).